We begin with the raw amino-acid sequence, 418 residues long: Serine hydroxymethyltransferase (418 aa).

(6S)-5,6,7,8-tetrahydrofolate contacts are provided by residues Leu121 and 125–127 (GHL). At Lys230 the chain carries N6-(pyridoxal phosphate)lysine. 356–358 (SPF) is a binding site for (6S)-5,6,7,8-tetrahydrofolate.

This sequence belongs to the SHMT family. As to quaternary structure, homodimer. The cofactor is pyridoxal 5'-phosphate.

The protein resides in the cytoplasm. It carries out the reaction (6R)-5,10-methylene-5,6,7,8-tetrahydrofolate + glycine + H2O = (6S)-5,6,7,8-tetrahydrofolate + L-serine. It functions in the pathway one-carbon metabolism; tetrahydrofolate interconversion. Its pathway is amino-acid biosynthesis; glycine biosynthesis; glycine from L-serine: step 1/1. Catalyzes the reversible interconversion of serine and glycine with tetrahydrofolate (THF) serving as the one-carbon carrier. This reaction serves as the major source of one-carbon groups required for the biosynthesis of purines, thymidylate, methionine, and other important biomolecules. Also exhibits THF-independent aldolase activity toward beta-hydroxyamino acids, producing glycine and aldehydes, via a retro-aldol mechanism. The polypeptide is Serine hydroxymethyltransferase (Shewanella woodyi (strain ATCC 51908 / MS32)).